A 593-amino-acid polypeptide reads, in one-letter code: ABC1 family protein lscO (593 aa).

2 disordered regions span residues 1–29 (MDVAFPGMERHDEKNPPGDDGTKPTGGKK) and 441–467 (PYKNPSSSDDESGESWQRTKETPEERK). Composition is skewed to basic and acidic residues over residues 8-22 (MERHDEKNPPGDDGT) and 457-467 (QRTKETPEERK).

This sequence belongs to the protein kinase superfamily. ADCK protein kinase family.

In terms of biological role, ABC1 family protein; part of the gene cluster that mediates the biosynthesis of the lipopeptide antibiotics leucinostatins that show extensive biological activities, including antimalarial, antiviral, antibacterial, antifungal, and antitumor activities, as well as phytotoxic. The function of lcsO within the leucinostatins biosynthesis has not been identified yet. The sequence is that of ABC1 family protein lscO from Purpureocillium lilacinum (Paecilomyces lilacinus).